A 271-amino-acid polypeptide reads, in one-letter code: Inactive phospholipid phosphatase 7 (271 aa).

Residues 1-69 form a disordered region; that stretch reads MPVSQSRARA…RQSQQLPEED (69 aa). At 1 to 112 the chain is on the cytoplasmic side; that stretch reads MPVSQSRARA…AASWASARSM (112 aa). Residues 24–36 are compositionally biased toward polar residues; sequence SLNQPPKGTQEPR. Phosphoserine is present on residues Ser-43 and Ser-62. An interaction with MTOR region spans residues 70-91; the sequence is CMQLNPSFKGIAFNSLLAIDIC. Residues 113–133 traverse the membrane as a helical segment; it reads VKLIGITSHGIPWIGGTILCL. The Extracellular segment spans residues 134 to 141; that stretch reads VRSSTLAG. A helical membrane pass occupies residues 142–162; the sequence is QEVLMNLLLALLLDIMTVAGV. Residues 163–202 lie on the Cytoplasmic side of the membrane; the sequence is QKLIKRRGPYETSPGLLDYLTMDIYAFPAGHASRAAMVSK. The chain crosses the membrane as a helical span at residues 203–223; sequence FFLSHLVLAVPLRVLLVLWAF. Residues 224–239 lie on the Extracellular side of the membrane; sequence CVGLSRVMIGRHHITD. The chain crosses the membrane as a helical span at residues 240–260; it reads VISGFIIGYFQFRLVELVWMS. Topologically, residues 261 to 271 are cytoplasmic; sequence SNTCQMLISAW.

Belongs to the PA-phosphatase related phosphoesterase family. In terms of assembly, homo- and heterooligomer. Interacts with MTOR; controls MTOR-dependent IGF2 expression during myoblast differentiation.

Its subcellular location is the nucleus envelope. The protein resides in the endoplasmic reticulum membrane. It is found in the membrane. In terms of biological role, plays a role as negative regulator of myoblast differentiation, in part through effects on MTOR signaling. Has no detectable enzymatic activity. The chain is Inactive phospholipid phosphatase 7 from Rattus norvegicus (Rat).